The following is a 249-amino-acid chain: Proteasome subunit alpha type-3 (249 aa).

The protein belongs to the peptidase T1A family. In terms of assembly, the 26S proteasome consists of a 20S proteasome core and two 19S regulatory subunits. The 20S proteasome core is composed of 28 subunits that are arranged in four stacked rings, resulting in a barrel-shaped structure. The two end rings are each formed by seven alpha subunits, and the two central rings are each formed by seven beta subunits. The catalytic chamber with the active sites is on the inside of the barrel.

It localises to the cytoplasm. The protein localises to the nucleus. Functionally, the proteasome is a multicatalytic proteinase complex which is characterized by its ability to cleave peptides with Arg, Phe, Tyr, Leu, and Glu adjacent to the leaving group at neutral or slightly basic pH. The proteasome has an ATP-dependent proteolytic activity. This is Proteasome subunit alpha type-3 (PAG1) from Spinacia oleracea (Spinach).